An 870-amino-acid chain; its full sequence is Aldehyde-alcohol dehydrogenase 2 (870 aa).

Cys252 is an active-site residue. 431–436 is a binding site for NAD(+); sequence GCGSYG.

The protein in the N-terminal section; belongs to the aldehyde dehydrogenase family. In the C-terminal section; belongs to the iron-containing alcohol dehydrogenase family. Seems to form a rod shaped homomer composed of at least 20 identical subunits. Zn(2+) is required as a cofactor. Requires Fe(2+) as cofactor.

The enzyme catalyses a primary alcohol + NAD(+) = an aldehyde + NADH + H(+). It catalyses the reaction a secondary alcohol + NAD(+) = a ketone + NADH + H(+). It carries out the reaction acetaldehyde + NAD(+) + CoA = acetyl-CoA + NADH + H(+). Its function is as follows. This enzyme has two NAD(+)-dependent activities: ADH and ACDH. May be a critical enzyme in the fermentative pathway. This is Aldehyde-alcohol dehydrogenase 2 (ADH2) from Entamoeba histolytica (strain ATCC 30459 / HM-1:IMSS / ABRM).